The following is a 178-amino-acid chain: Ribosome maturation factor RimM (178 aa).

Residues 99-178 enclose the PRC barrel domain; that stretch reads QGEFYWRDLI…EITVDWDPGF (80 aa).

It belongs to the RimM family. As to quaternary structure, binds ribosomal protein uS19.

It is found in the cytoplasm. An accessory protein needed during the final step in the assembly of 30S ribosomal subunit, possibly for assembly of the head region. Essential for efficient processing of 16S rRNA. May be needed both before and after RbfA during the maturation of 16S rRNA. It has affinity for free ribosomal 30S subunits but not for 70S ribosomes. The polypeptide is Ribosome maturation factor RimM (Pseudoalteromonas translucida (strain TAC 125)).